We begin with the raw amino-acid sequence, 616 residues long: Chaperone protein HscA homolog (616 aa).

The protein belongs to the heat shock protein 70 family.

Functionally, chaperone involved in the maturation of iron-sulfur cluster-containing proteins. Has a low intrinsic ATPase activity which is markedly stimulated by HscB. The sequence is that of Chaperone protein HscA homolog from Tolumonas auensis (strain DSM 9187 / NBRC 110442 / TA 4).